We begin with the raw amino-acid sequence, 460 residues long: Ribosome biogenesis protein YTM1 (460 aa).

Positions 8-89 are ubiquitin-like (UBL) domain; the sequence is VKIRFFTREK…EASLNVEYTR (82 aa). The tract at residues 99–460 is sufficient for interaction with ERB1 and association with 66S pre-ribosomes; the sequence is SFSNEDWVSS…INKGDNIFKN (362 aa). 7 WD repeats span residues 101 to 140, 142 to 180, 206 to 244, 285 to 325, 327 to 366, 373 to 413, and 424 to 460; these read SNEDWVSSLDVGDGSKHIISGSYDGIVRTWDLSGNVQKQY, GHSGPIRAVKYISNTRLVSAGNDRTLRLWKTKNDDLKLT, GHKAPVVSIDVSDNSRILSASYDNSIGFWSTIYKEMTVV, SHTA…CIDT, TTSYSLLSIAQLSTLNLLACGSSARHITLHDPRVGASSKV, GHKN…PMYT, and GVNDKVFAVKWAEKVGIISAGQDKKIQINKGDNIFKN.

The protein belongs to the WD repeat WDR12/YTM1 family. As to quaternary structure, component of the NOP7 complex, composed of ERB1, NOP7 and YTM1. The complex is held together by ERB1, which interacts with NOP7 via its N-terminal domain and with YTM1 via a high-affinity interaction between the seven-bladed beta-propeller domains of the 2 proteins. The NOP7 complex associates with the 66S pre-ribosome. Interacts (via UBL domain) with MDN1 (via VWFA/MIDAS domain).

The protein resides in the nucleus. It localises to the nucleolus. It is found in the nucleoplasm. Component of the NOP7 complex, which is required for maturation of the 25S and 5.8S ribosomal RNAs and formation of the 60S ribosome. This chain is Ribosome biogenesis protein YTM1, found in Saccharomyces cerevisiae (strain YJM789) (Baker's yeast).